The following is a 566-amino-acid chain: Protein RocB (566 aa).

Functionally, involved in arginine degradative pathway. This is Protein RocB (rocB) from Bacillus subtilis (strain 168).